A 353-amino-acid chain; its full sequence is Aromatic amino acid aminotransferase (353 aa).

The residue at position 217 (lysine 217) is an N6-(pyridoxal phosphate)lysine.

The protein belongs to the class-II pyridoxal-phosphate-dependent aminotransferase family. As to quaternary structure, homodimer. Pyridoxal 5'-phosphate is required as a cofactor.

The enzyme catalyses an aromatic L-alpha-amino acid + 2-oxoglutarate = an aromatic oxo-acid + L-glutamate. Functionally, aminotransferase that catalyzes the conversion of aromatic amino acids and 2-oxoglutarate into corresponding aromatic oxo acids and L-glutamate. This chain is Aromatic amino acid aminotransferase, found in Mycobacterium tuberculosis (strain ATCC 25177 / H37Ra).